The following is a 557-amino-acid chain: Formate--tetrahydrofolate ligase 2 (557 aa).

Thr-66–Thr-73 is an ATP binding site.

It belongs to the formate--tetrahydrofolate ligase family.

The enzyme catalyses (6S)-5,6,7,8-tetrahydrofolate + formate + ATP = (6R)-10-formyltetrahydrofolate + ADP + phosphate. It functions in the pathway one-carbon metabolism; tetrahydrofolate interconversion. In Streptococcus pyogenes serotype M3 (strain ATCC BAA-595 / MGAS315), this protein is Formate--tetrahydrofolate ligase 2.